The sequence spans 109 residues: uncharacterized protein (109 aa).

This is an uncharacterized protein from Homo sapiens (Human).